Here is a 221-residue protein sequence, read N- to C-terminus: Thiamine-phosphate synthase (221 aa).

4-amino-2-methyl-5-(diphosphooxymethyl)pyrimidine is bound by residues 49 to 53 and N85; that span reads QFREK. Positions 86 and 105 each coordinate Mg(2+). S124 contacts 4-amino-2-methyl-5-(diphosphooxymethyl)pyrimidine. Residue 151–153 coordinates 2-[(2R,5Z)-2-carboxy-4-methylthiazol-5(2H)-ylidene]ethyl phosphate; that stretch reads TQS. K154 contacts 4-amino-2-methyl-5-(diphosphooxymethyl)pyrimidine. 2-[(2R,5Z)-2-carboxy-4-methylthiazol-5(2H)-ylidene]ethyl phosphate is bound by residues G183 and 203-204; that span reads IS.

This sequence belongs to the thiamine-phosphate synthase family. Mg(2+) serves as cofactor.

The catalysed reaction is 2-[(2R,5Z)-2-carboxy-4-methylthiazol-5(2H)-ylidene]ethyl phosphate + 4-amino-2-methyl-5-(diphosphooxymethyl)pyrimidine + 2 H(+) = thiamine phosphate + CO2 + diphosphate. It catalyses the reaction 2-(2-carboxy-4-methylthiazol-5-yl)ethyl phosphate + 4-amino-2-methyl-5-(diphosphooxymethyl)pyrimidine + 2 H(+) = thiamine phosphate + CO2 + diphosphate. The enzyme catalyses 4-methyl-5-(2-phosphooxyethyl)-thiazole + 4-amino-2-methyl-5-(diphosphooxymethyl)pyrimidine + H(+) = thiamine phosphate + diphosphate. It functions in the pathway cofactor biosynthesis; thiamine diphosphate biosynthesis; thiamine phosphate from 4-amino-2-methyl-5-diphosphomethylpyrimidine and 4-methyl-5-(2-phosphoethyl)-thiazole: step 1/1. Functionally, condenses 4-methyl-5-(beta-hydroxyethyl)thiazole monophosphate (THZ-P) and 2-methyl-4-amino-5-hydroxymethyl pyrimidine pyrophosphate (HMP-PP) to form thiamine monophosphate (TMP). This Histophilus somni (strain 129Pt) (Haemophilus somnus) protein is Thiamine-phosphate synthase.